We begin with the raw amino-acid sequence, 268 residues long: Malonyl-[acyl-carrier protein] O-methyltransferase (268 aa).

It belongs to the methyltransferase superfamily.

It catalyses the reaction malonyl-[ACP] + S-adenosyl-L-methionine = malonyl-[ACP] methyl ester + S-adenosyl-L-homocysteine. The protein operates within cofactor biosynthesis; biotin biosynthesis. In terms of biological role, converts the free carboxyl group of a malonyl-thioester to its methyl ester by transfer of a methyl group from S-adenosyl-L-methionine (SAM). It allows to synthesize pimeloyl-ACP via the fatty acid synthetic pathway. This Prosthecochloris aestuarii (strain DSM 271 / SK 413) protein is Malonyl-[acyl-carrier protein] O-methyltransferase.